The primary structure comprises 194 residues: CASP-like protein Ni6 (194 aa).

Residues 1-27 lie on the Cytoplasmic side of the membrane; the sequence is MSSMETEKGAVPTPQAPPVAPTDNKYR. The chain crosses the membrane as a helical span at residues 28 to 48; it reads VVDVILRVLLLAASIASVVLM. The Extracellular portion of the chain corresponds to 49–75; the sequence is VTSKQTEIIVSPFGSRPNAAKFQNSPA. A helical transmembrane segment spans residues 76–96; that stretch reads FIYLVAALSVAGLYSIITALV. The Cytoplasmic segment spans residues 97–109; it reads SLSYMRKPIVPPK. Residues 110–130 form a helical membrane-spanning segment; it reads LFWILLIHDVLLLGIVAAATG. The Extracellular segment spans residues 131–161; that stretch reads TAGGVGYIGLKGNTHVRWGKIRNVYDKFCRH. The helical transmembrane segment at 162-182 threads the bilayer; that stretch reads VGASIIVSLFAAAVLVLLVFV. The Cytoplasmic portion of the chain corresponds to 183-194; it reads NANSLYRRIPKY.

Belongs to the Casparian strip membrane proteins (CASP) family. In terms of assembly, homodimer and heterodimers.

The protein resides in the cell membrane. In Beta vulgaris subsp. maritima (Sea beet), this protein is CASP-like protein Ni6 (Ni6).